We begin with the raw amino-acid sequence, 504 residues long: Probable cytochrome P450 513E1 (504 aa).

A helical transmembrane segment spans residues 1–21 (MNLYISILILIISLIIFFKNN). A heme-binding site is contributed by cysteine 450.

Belongs to the cytochrome P450 family. Requires heme as cofactor.

The protein localises to the membrane. In Dictyostelium discoideum (Social amoeba), this protein is Probable cytochrome P450 513E1 (cyp513E1).